The sequence spans 83 residues: Sec-independent protein translocase protein TatA (83 aa).

A helical transmembrane segment spans residues 1 to 21 (MGNMGIWQLLIIAVIVILLFG). Composition is skewed to basic and acidic residues over residues 47–57 (EEKKALEETAS) and 71–83 (AEKK…KEQV). A disordered region spans residues 47–83 (EEKKALEETASEKATPSVEKTAPNAEKKTETKDKEQV).

This sequence belongs to the TatA/E family. In terms of assembly, the Tat system comprises two distinct complexes: a TatABC complex, containing multiple copies of TatA, TatB and TatC subunits, and a separate TatA complex, containing only TatA subunits. Substrates initially bind to the TatABC complex, which probably triggers association of the separate TatA complex to form the active translocon.

The protein localises to the cell inner membrane. Part of the twin-arginine translocation (Tat) system that transports large folded proteins containing a characteristic twin-arginine motif in their signal peptide across membranes. TatA could form the protein-conducting channel of the Tat system. In Shewanella woodyi (strain ATCC 51908 / MS32), this protein is Sec-independent protein translocase protein TatA.